The following is a 619-amino-acid chain: Translation initiation factor IF-2 (619 aa).

The tr-type G domain maps to Pro120 to Tyr289. Residues Gly129–Thr136 form a G1 region. Gly129–Thr136 serves as a coordination point for GTP. Residues Gly154 to Lys158 are G2. Positions Asp176–Gly179 are G3. GTP contacts are provided by residues Asp176–His180 and Asn230–Asp233. Positions Asn230–Asp233 are G4. The segment at Ser266–Leu268 is G5.

Belongs to the TRAFAC class translation factor GTPase superfamily. Classic translation factor GTPase family. IF-2 subfamily.

The protein localises to the cytoplasm. One of the essential components for the initiation of protein synthesis. Protects formylmethionyl-tRNA from spontaneous hydrolysis and promotes its binding to the 30S ribosomal subunits. Also involved in the hydrolysis of GTP during the formation of the 70S ribosomal complex. The sequence is that of Translation initiation factor IF-2 (infB) from Mycoplasma genitalium (strain ATCC 33530 / DSM 19775 / NCTC 10195 / G37) (Mycoplasmoides genitalium).